A 508-amino-acid polypeptide reads, in one-letter code: MRKRYAALAIVLALILSLALPELLFQLYPSSAVLNVDKLLNPPPENPNPFAAEPPANKYLDSVWAESHRNSYCQASSPFEAPRFPEKLRFEYLTLRDLPITIAFSEPYEDGKRVAWVSTVGFTGKIAKIDLENFSLIDEITPEGHRMGISGAYSVLANRTFFVPKLNRIYAYGDNGRLSRIELKGVFELPEVCSGEEIVGITLTYDGMIAFATNFGRVGVVSPNFGDYALYPINQNCEIAETISNSIAADESGGIYVVTDKAVYRINWDGKSLRLGWRAEYQTGEQRGGRLGKGSGSTPSLMNCGEDRFVVITDGQRLMHMVLFWRDEIPEDWKGIEGRDRRIAAEVPVTFGFEKDESYSEQSVLVRNCSAAITNNRLGLRLLDLLPERLQPFSMLLSNVPGIAPYGVEKFEWDAEKRALRSVWASNVSIPNAIPTMSDKTNLLYAIGQRGGFWTLEAVNWESGEAVWYARISPLPAHNSFYAATEIGPDGCIYTGMLWGVARLCNAD.

Residues Ala7–Pro29 form a helical membrane-spanning segment.

The protein resides in the membrane. This is an uncharacterized protein from Archaeoglobus fulgidus (strain ATCC 49558 / DSM 4304 / JCM 9628 / NBRC 100126 / VC-16).